The chain runs to 271 residues: Ribosomal RNA small subunit methyltransferase A (271 aa).

S-adenosyl-L-methionine-binding residues include Asn-28, Leu-30, Gly-54, Glu-75, Asp-99, and Asn-117.

It belongs to the class I-like SAM-binding methyltransferase superfamily. rRNA adenine N(6)-methyltransferase family. RsmA subfamily.

It is found in the cytoplasm. It carries out the reaction adenosine(1518)/adenosine(1519) in 16S rRNA + 4 S-adenosyl-L-methionine = N(6)-dimethyladenosine(1518)/N(6)-dimethyladenosine(1519) in 16S rRNA + 4 S-adenosyl-L-homocysteine + 4 H(+). Functionally, specifically dimethylates two adjacent adenosines (A1518 and A1519) in the loop of a conserved hairpin near the 3'-end of 16S rRNA in the 30S particle. May play a critical role in biogenesis of 30S subunits. This is Ribosomal RNA small subunit methyltransferase A from Thermus thermophilus (strain ATCC 27634 / DSM 579 / HB8).